A 277-amino-acid polypeptide reads, in one-letter code: Urease accessory protein UreD (277 aa).

It belongs to the UreD family. UreD, UreF and UreG form a complex that acts as a GTP-hydrolysis-dependent molecular chaperone, activating the urease apoprotein by helping to assemble the nickel containing metallocenter of UreC. The UreE protein probably delivers the nickel.

The protein resides in the cytoplasm. In terms of biological role, required for maturation of urease via the functional incorporation of the urease nickel metallocenter. This chain is Urease accessory protein UreD, found in Rhodopseudomonas palustris (strain BisB18).